A 114-amino-acid polypeptide reads, in one-letter code: Gonadotropin subunit beta-1 (114 aa).

An N-terminal signal peptide occupies residues 1-19; sequence MQLVLMAAVLALAEVGCFG. 6 cysteine pairs are disulfide-bonded: C20–C66, C32–C80, C37–C114, C43–C92, C47–C94, and C97–C104. An N-linked (GlcNAc...) asparagine glycan is attached at N24.

The protein belongs to the glycoprotein hormones subunit beta family. In terms of assembly, heterodimer of an alpha and a beta chain.

Its subcellular location is the secreted. Functionally, involved in gametogenesis and steroidogenesis. In Fundulus heteroclitus (Killifish), this protein is Gonadotropin subunit beta-1 (cgba).